The chain runs to 130 residues: Phosphoribosyl-AMP cyclohydrolase (130 aa).

Residue aspartate 77 coordinates Mg(2+). Cysteine 78 lines the Zn(2+) pocket. 2 residues coordinate Mg(2+): aspartate 79 and aspartate 81. 2 residues coordinate Zn(2+): cysteine 95 and cysteine 102.

The protein belongs to the PRA-CH family. Homodimer. Requires Mg(2+) as cofactor. Zn(2+) is required as a cofactor.

It localises to the cytoplasm. The enzyme catalyses 1-(5-phospho-beta-D-ribosyl)-5'-AMP + H2O = 1-(5-phospho-beta-D-ribosyl)-5-[(5-phospho-beta-D-ribosylamino)methylideneamino]imidazole-4-carboxamide. Its pathway is amino-acid biosynthesis; L-histidine biosynthesis; L-histidine from 5-phospho-alpha-D-ribose 1-diphosphate: step 3/9. Its function is as follows. Catalyzes the hydrolysis of the adenine ring of phosphoribosyl-AMP. In Pseudomonas putida (strain ATCC 700007 / DSM 6899 / JCM 31910 / BCRC 17059 / LMG 24140 / F1), this protein is Phosphoribosyl-AMP cyclohydrolase.